The primary structure comprises 291 residues: Ribonuclease Z (291 aa).

Zn(2+) contacts are provided by His61, His63, Asp65, His66, His133, Asp201, and His257. Asp65 acts as the Proton acceptor in catalysis.

It belongs to the RNase Z family. In terms of assembly, homodimer. Requires Zn(2+) as cofactor.

The enzyme catalyses Endonucleolytic cleavage of RNA, removing extra 3' nucleotides from tRNA precursor, generating 3' termini of tRNAs. A 3'-hydroxy group is left at the tRNA terminus and a 5'-phosphoryl group is left at the trailer molecule.. In terms of biological role, zinc phosphodiesterase, which displays some tRNA 3'-processing endonuclease activity. Probably involved in tRNA maturation, by removing a 3'-trailer from precursor tRNA. In Saccharolobus islandicus (strain L.S.2.15 / Lassen #1) (Sulfolobus islandicus), this protein is Ribonuclease Z.